The sequence spans 509 residues: 2-isopropylmalate synthase (509 aa).

The region spanning Ile5 to Lys267 is the Pyruvate carboxyltransferase domain. Positions 14, 202, 204, and 238 each coordinate Mn(2+). Residues Lys391–Asn509 form a regulatory domain region.

Belongs to the alpha-IPM synthase/homocitrate synthase family. LeuA type 1 subfamily. Homodimer. The cofactor is Mn(2+).

It is found in the cytoplasm. The catalysed reaction is 3-methyl-2-oxobutanoate + acetyl-CoA + H2O = (2S)-2-isopropylmalate + CoA + H(+). It participates in amino-acid biosynthesis; L-leucine biosynthesis; L-leucine from 3-methyl-2-oxobutanoate: step 1/4. Its function is as follows. Catalyzes the condensation of the acetyl group of acetyl-CoA with 3-methyl-2-oxobutanoate (2-ketoisovalerate) to form 3-carboxy-3-hydroxy-4-methylpentanoate (2-isopropylmalate). This Staphylococcus aureus (strain MW2) protein is 2-isopropylmalate synthase.